We begin with the raw amino-acid sequence, 130 residues long: Fluoride-specific ion channel FluC (130 aa).

The next 4 membrane-spanning stretches (helical) occupy residues 2 to 22 (GLLLLLVGIGGGFGAMARFAL), 36 to 56 (GILLCNIIGSLIIGMMAAFLI), 71 to 91 (FLLVTGFLGGFTTFSSFSLDI), and 100 to 120 (IFIAIGYIMVSVLASLIAVIL). 2 residues coordinate Na(+): G79 and T82.

This sequence belongs to the fluoride channel Fluc/FEX (TC 1.A.43) family.

It is found in the cell inner membrane. The enzyme catalyses fluoride(in) = fluoride(out). With respect to regulation, na(+) is not transported, but it plays an essential structural role and its presence is essential for fluoride channel function. Functionally, fluoride-specific ion channel. Important for reducing fluoride concentration in the cell, thus reducing its toxicity. In Francisella tularensis subsp. mediasiatica (strain FSC147), this protein is Fluoride-specific ion channel FluC.